A 470-amino-acid chain; its full sequence is ATP synthase subunit beta (470 aa).

151 to 158 (GGAGVGKT) is a binding site for ATP.

It belongs to the ATPase alpha/beta chains family. In terms of assembly, F-type ATPases have 2 components, CF(1) - the catalytic core - and CF(0) - the membrane proton channel. CF(1) has five subunits: alpha(3), beta(3), gamma(1), delta(1), epsilon(1). CF(0) has three main subunits: a(1), b(2) and c(9-12). The alpha and beta chains form an alternating ring which encloses part of the gamma chain. CF(1) is attached to CF(0) by a central stalk formed by the gamma and epsilon chains, while a peripheral stalk is formed by the delta and b chains.

The protein resides in the cell membrane. It catalyses the reaction ATP + H2O + 4 H(+)(in) = ADP + phosphate + 5 H(+)(out). Functionally, produces ATP from ADP in the presence of a proton gradient across the membrane. The catalytic sites are hosted primarily by the beta subunits. In Mycoplasma mobile (strain ATCC 43663 / 163K / NCTC 11711) (Mesomycoplasma mobile), this protein is ATP synthase subunit beta.